Reading from the N-terminus, the 144-residue chain is MRLNTLAPAAGSKHAPKRVGRGIGSGLGKTGGRGHKGQKSRSGGKVRPGFEGGQMPLKQRLPKFGFTSRKSLVSAEVRLAELAKVSGDVVDLNSLKAANIITKNIEFVKVVLSGEINKAVTVKGLRVTKGAKAAIEAAGGKIEE.

A disordered region spans residues 1 to 58 (MRLNTLAPAAGSKHAPKRVGRGIGSGLGKTGGRGHKGQKSRSGGKVRPGFEGGQMPLK). The span at 21 to 31 (RGIGSGLGKTG) shows a compositional bias: gly residues. Residues 32–44 (GRGHKGQKSRSGG) are compositionally biased toward basic residues.

This sequence belongs to the universal ribosomal protein uL15 family. In terms of assembly, part of the 50S ribosomal subunit.

Binds to the 23S rRNA. This chain is Large ribosomal subunit protein uL15, found in Vibrio parahaemolyticus serotype O3:K6 (strain RIMD 2210633).